Reading from the N-terminus, the 200-residue chain is dITP/XTP pyrophosphatase (200 aa).

Residue 7 to 12 (TSNKHK) coordinates substrate. E38 and D73 together coordinate Mg(2+). The active-site Proton acceptor is the D73. Substrate is bound by residues S74, 154–157 (FGYD), K177, and 182–183 (HR).

This sequence belongs to the HAM1 NTPase family. Homodimer. Requires Mg(2+) as cofactor.

The catalysed reaction is XTP + H2O = XMP + diphosphate + H(+). The enzyme catalyses dITP + H2O = dIMP + diphosphate + H(+). It carries out the reaction ITP + H2O = IMP + diphosphate + H(+). Functionally, pyrophosphatase that catalyzes the hydrolysis of nucleoside triphosphates to their monophosphate derivatives, with a high preference for the non-canonical purine nucleotides XTP (xanthosine triphosphate), dITP (deoxyinosine triphosphate) and ITP. Seems to function as a house-cleaning enzyme that removes non-canonical purine nucleotides from the nucleotide pool, thus preventing their incorporation into DNA/RNA and avoiding chromosomal lesions. This is dITP/XTP pyrophosphatase from Campylobacter jejuni subsp. doylei (strain ATCC BAA-1458 / RM4099 / 269.97).